Consider the following 242-residue polypeptide: Peptidyl-prolyl cis-trans isomerase FKBP20-2, chloroplastic (242 aa).

The N-terminal 31 residues, 1 to 31 (MVTILSTPLSPRLTFLCETKLSLSRSNRSVC), are a transit peptide targeting the chloroplast. A thylakoid-targeting transit peptide spans 32 to 67 (CSLSEEPKDQCLSRRSLVYVLVASPCLLLPALSSSA). One can recognise a PPIase FKBP-type domain in the interval 138–225 (GQQVTFHYIG…VFDVELLSIQ (88 aa)). C227 and C241 are disulfide-bonded.

This sequence belongs to the FKBP-type PPIase family. As to quaternary structure, interacts in vitro with LTO1.

The protein resides in the plastid. It is found in the chloroplast thylakoid lumen. The enzyme catalyses [protein]-peptidylproline (omega=180) = [protein]-peptidylproline (omega=0). Functionally, PPIases accelerate the folding of proteins. It catalyzes the cis-trans isomerization of proline imidic peptide bonds in oligopeptides. Involved in the accumulation of the PSII complex. In Arabidopsis thaliana (Mouse-ear cress), this protein is Peptidyl-prolyl cis-trans isomerase FKBP20-2, chloroplastic.